The sequence spans 135 residues: Large ribosomal subunit protein uL16c (135 aa).

The protein belongs to the universal ribosomal protein uL16 family. In terms of assembly, part of the 50S ribosomal subunit.

The protein localises to the plastid. It is found in the chloroplast. In Ranunculus macranthus (Large buttercup), this protein is Large ribosomal subunit protein uL16c.